The chain runs to 61 residues: Large ribosomal subunit protein uL30 (61 aa).

The protein belongs to the universal ribosomal protein uL30 family. As to quaternary structure, part of the 50S ribosomal subunit.

In Saccharophagus degradans (strain 2-40 / ATCC 43961 / DSM 17024), this protein is Large ribosomal subunit protein uL30.